The following is a 286-amino-acid chain: MNLKHKWDVYSRLTRLDRPIGTLLLLWPCLMALVLAAGGMPDLKVLIIFIIGVVIMRACGCIINDYADRDLDSHVERTKSRPLASGEISTKEALLLFVILGLAAFGLVLLLNGLVVKLSVVGIILTIIYPFTKRVTNMPQMFLGVVWSWSIPMAYAAQTGEVPIEAWWLFAANWFWTVAYDTMYAMVDRDDDLKIGIKSTAILFGKYDRQIIGLFQIAALFCFVAAGWSADRGLVYGLGLLTFVGFSTYQQMLIFGRERAPCFKAFLNNNWAGLVLFVSLGADYLF.

8 consecutive transmembrane segments (helical) span residues isoleucine 20 to methionine 40, leucine 43 to isoleucine 63, leucine 96 to valine 116, phenylalanine 142 to valine 162, tryptophan 167 to valine 187, glutamine 210 to alanine 230, valine 235 to phenylalanine 255, and phenylalanine 266 to phenylalanine 286.

Belongs to the UbiA prenyltransferase family. Requires Mg(2+) as cofactor.

It localises to the cell inner membrane. It carries out the reaction all-trans-octaprenyl diphosphate + 4-hydroxybenzoate = 4-hydroxy-3-(all-trans-octaprenyl)benzoate + diphosphate. It participates in cofactor biosynthesis; ubiquinone biosynthesis. Its function is as follows. Catalyzes the prenylation of para-hydroxybenzoate (PHB) with an all-trans polyprenyl group. Mediates the second step in the final reaction sequence of ubiquinone-8 (UQ-8) biosynthesis, which is the condensation of the polyisoprenoid side chain with PHB, generating the first membrane-bound Q intermediate 3-octaprenyl-4-hydroxybenzoate. The polypeptide is 4-hydroxybenzoate octaprenyltransferase (Shewanella oneidensis (strain ATCC 700550 / JCM 31522 / CIP 106686 / LMG 19005 / NCIMB 14063 / MR-1)).